The following is a 284-amino-acid chain: Probable O-methyltransferase ustE (284 aa).

N-linked (GlcNAc...) asparagine glycans are attached at residues Asn22 and Asn29. 2 consecutive transmembrane segments (helical) span residues Leu88–Val108 and Tyr157–Ile177. Asn205 carries N-linked (GlcNAc...) asparagine glycosylation. A helical membrane pass occupies residues Gly215–Trp235. The N-linked (GlcNAc...) asparagine glycan is linked to Asn264.

This sequence belongs to the class VI-like SAM-binding methyltransferase superfamily. Isoprenylcysteine carboxyl methyltransferase family.

The protein resides in the membrane. Its pathway is secondary metabolite biosynthesis. In terms of biological role, probable O-methyltransferase; part of the gene cluster that mediates the biosynthesis of ustilaginoidins, dimeric gamma-naphthopyrones isolated from different fungal species. The first step in the biosynthesis of ustilaginoidins is the production of gamma-naphthopyrone precursor YWA1 by the non-reducing polyketide synthase ustP, via condensation of one acetyl-CoA starter unit with 6 malonyl-CoA units. YWA1 is then probably substrate of the ustZ to yield norrubrofusarin via a dehydration reaction. A key enzyme in the biosynthetic pathway is the laccase ustL, which catalyzes the oxidative dimerization of norrubrofusarin to ustilaginoidin A. It can produce the M- and P-atropisomers in varying amounts, depending on the reaction conditions. For the biosynthesis of 3-methylustilaginoid in derivatives such as chaetochromin A, a methylated derivative of YWA1 is required. The C-methylation is considered to be catalyzed by ustM, the phosphopantetheine attachment site of which indicates that it acts on the growing polyketide chain before release of the product. For the biosynthesis of chaetochromin A, it is assumed that saturation of the D2 double bond takes place before dimerization, and is probably catalyzed by an external reductase because no candidate gene was identified within the cluster. In Ustilaginoidea virens (Rice false smut fungus), this protein is Probable O-methyltransferase ustE.